A 411-amino-acid polypeptide reads, in one-letter code: LL-diaminopimelate aminotransferase (411 aa).

Positions 16 and 43 each coordinate substrate. Pyridoxal 5'-phosphate is bound by residues Tyr-73, 109–110 (AK), Tyr-133, Asn-188, Tyr-219, and 247–249 (SFS). Residues Lys-110, Tyr-133, and Asn-188 each coordinate substrate. Residue Lys-250 is modified to N6-(pyridoxal phosphate)lysine. Residues Arg-258 and Asn-293 each contribute to the pyridoxal 5'-phosphate site. Substrate-binding residues include Asn-293 and Arg-389.

This sequence belongs to the class-I pyridoxal-phosphate-dependent aminotransferase family. LL-diaminopimelate aminotransferase subfamily. Homodimer. Pyridoxal 5'-phosphate serves as cofactor.

It catalyses the reaction (2S,6S)-2,6-diaminopimelate + 2-oxoglutarate = (S)-2,3,4,5-tetrahydrodipicolinate + L-glutamate + H2O + H(+). Its pathway is amino-acid biosynthesis; L-lysine biosynthesis via DAP pathway; LL-2,6-diaminopimelate from (S)-tetrahydrodipicolinate (aminotransferase route): step 1/1. Functionally, involved in the synthesis of meso-diaminopimelate (m-DAP or DL-DAP), required for both lysine and peptidoglycan biosynthesis. Catalyzes the direct conversion of tetrahydrodipicolinate to LL-diaminopimelate. In Methanobrevibacter smithii (strain ATCC 35061 / DSM 861 / OCM 144 / PS), this protein is LL-diaminopimelate aminotransferase.